The primary structure comprises 187 residues: Transcriptional repressor NrdR (187 aa).

Residues 3–34 (CPFCRHPDSRVVDSRTTDDGTSIRRRRQCPDC) fold into a zinc finger. The ATP-cone domain maps to 46–136 (LMVVKRSGVT…VYRAFDSLED (91 aa)). The disordered stretch occupies residues 146-187 (EEQRERPAVDDEDHEDAGAERQGTDRGSGGTVEVPVPATVAD).

Belongs to the NrdR family. Requires Zn(2+) as cofactor.

In terms of biological role, negatively regulates transcription of bacterial ribonucleotide reductase nrd genes and operons by binding to NrdR-boxes. This is Transcriptional repressor NrdR from Streptomyces avermitilis (strain ATCC 31267 / DSM 46492 / JCM 5070 / NBRC 14893 / NCIMB 12804 / NRRL 8165 / MA-4680).